We begin with the raw amino-acid sequence, 122 residues long: Large ribosomal subunit protein uL14 (122 aa).

This sequence belongs to the universal ribosomal protein uL14 family. As to quaternary structure, part of the 50S ribosomal subunit. Forms a cluster with proteins L3 and L19. In the 70S ribosome, L14 and L19 interact and together make contacts with the 16S rRNA in bridges B5 and B8.

In terms of biological role, binds to 23S rRNA. Forms part of two intersubunit bridges in the 70S ribosome. The protein is Large ribosomal subunit protein uL14 of Fervidobacterium nodosum (strain ATCC 35602 / DSM 5306 / Rt17-B1).